We begin with the raw amino-acid sequence, 354 residues long: Ion-translocating oxidoreductase complex subunit D (354 aa).

The next 5 membrane-spanning stretches (helical) occupy residues 19 to 39, 40 to 60, 70 to 89, 94 to 116, and 123 to 143; these read IMLW…YYFG, FGVL…EFLV, FYIS…VAIP, YWII…GGLG, and AMVG…TWLA. Thr186 is subject to FMN phosphoryl threonine. The next 5 helical transmembrane spans lie at 215-235, 242-262, 266-286, 300-320, and 321-341; these read LAGL…LFLV, WQIP…SWLF, MPSP…FFIA, LVFG…GGYP, and DGAA…DQYT.

It belongs to the NqrB/RnfD family. The complex is composed of six subunits: RnfA, RnfB, RnfC, RnfD, RnfE and RnfG. FMN serves as cofactor.

It is found in the cell inner membrane. Part of a membrane-bound complex that couples electron transfer with translocation of ions across the membrane. The sequence is that of Ion-translocating oxidoreductase complex subunit D from Mannheimia succiniciproducens (strain KCTC 0769BP / MBEL55E).